Here is a 100-residue protein sequence, read N- to C-terminus: Small ribosomal subunit protein uS14c (100 aa).

This sequence belongs to the universal ribosomal protein uS14 family. As to quaternary structure, part of the 30S ribosomal subunit.

Its subcellular location is the plastid. It localises to the chloroplast. Its function is as follows. Binds 16S rRNA, required for the assembly of 30S particles. The sequence is that of Small ribosomal subunit protein uS14c from Lactuca sativa (Garden lettuce).